Reading from the N-terminus, the 616-residue chain is MADKGMTYSFDVRDNTLVVRRSTATKSGIKISYREDRGTSLLQKAFAGTEDEFWVELDQDVYVDKKIREFLVEEKMKDMSTRVSGAVAAAIERSVEFDNFSKEAAANIEMAGVDDEEAGGSGLVDNRRKNKGVSNMAYNLSLFIGMVFPALTTFFSAILSEGEMSIWQNGQAIMRILALADEDGKRQTRTGGQRVDMADVTKLNVVTANGKVKQVEVNLNDLKAAFRQSRPKRSDYRKGQGSKATESSISNQCMALIMKSVLSADQLFAPGVKMMRTNGFNASYTTLAEGANIPSKYLRHMRNCGGVALDLMGMKRIKNSPEGAKSKIFSIIQKKVRGRCRTEEQRLLTSALKISDGENKFQRIMDTLCTSFLIDPPRTTKCFIPPISSLMMYIQEGNSVLAMDFMKNGEDACKICREAKLKVGVNSTFTMSVARTCVAVSMVATAFCSADIIENAVPGSERYRSNIKANTTKPKKDSTYTIQGLRLSNVRYEARPETSQSNTDRSWQVNVTDSFGGLAVFNQGAIREMLGDGTSETTSVNVRALVKRILKSASERSARAVKTFMVGEQGKSAIVISGVGLFSIDFEGVEEAERITDMTPEIEFDEDDEEEEDIDI.

2 consecutive short sequence motifs (nuclear localization signal) follow at residues 230–233 and 473–476; these read RPKR and KPKK.

As to quaternary structure, homomultimerizes to form the nucleocapsid. Binds to viral genomic RNA. Protein-RNA contacts are mediated by a combination of electrostatic interactions between positively charged residues and the phosphate backbone and planar interactions between aromatic side chains and bases.

Its subcellular location is the virion. It is found in the host nucleus. The protein resides in the host nucleolus. Functionally, encapsidates the negative strand viral RNA, protecting it from nucleases. The encapsidated genomic RNA is termed the ribonucleoprotein (RNP) and serves as template for transcription and replication. The polypeptide is Nucleoprotein (Gadus morhua (Atlantic cod)).